The following is a 364-amino-acid chain: Fructose-bisphosphate aldolase C-A (364 aa).

2 residues coordinate substrate: arginine 56 and lysine 147. Glutamate 188 serves as the catalytic Proton acceptor. The active-site Schiff-base intermediate with dihydroxyacetone-P is the lysine 230.

This sequence belongs to the class I fructose-bisphosphate aldolase family. In terms of assembly, homotetramer. Expressed specifically in Purkinje cells in the brain.

It catalyses the reaction beta-D-fructose 1,6-bisphosphate = D-glyceraldehyde 3-phosphate + dihydroxyacetone phosphate. The protein operates within carbohydrate degradation; glycolysis; D-glyceraldehyde 3-phosphate and glycerone phosphate from D-glucose: step 4/4. The chain is Fructose-bisphosphate aldolase C-A from Danio rerio (Zebrafish).